A 165-amino-acid chain; its full sequence is Chorismate pyruvate-lyase (165 aa).

Residues Met-35, Arg-77, Leu-115, and Glu-156 each contribute to the substrate site.

The protein belongs to the UbiC family. In terms of assembly, monomer.

It localises to the cytoplasm. It carries out the reaction chorismate = 4-hydroxybenzoate + pyruvate. The protein operates within cofactor biosynthesis; ubiquinone biosynthesis. Its function is as follows. Removes the pyruvyl group from chorismate, with concomitant aromatization of the ring, to provide 4-hydroxybenzoate (4HB) for the ubiquinone pathway. The chain is Chorismate pyruvate-lyase from Escherichia coli O127:H6 (strain E2348/69 / EPEC).